A 298-amino-acid chain; its full sequence is Beta-soluble NSF attachment protein (298 aa).

The protein belongs to the SNAP family. Interacts with PRKCABP, and disrupts the interaction between GRIA2 and PRKCABP, leading to the internalization of GRIA2.

The protein localises to the membrane. In terms of biological role, required for vesicular transport between the endoplasmic reticulum and the Golgi apparatus. This chain is Beta-soluble NSF attachment protein (NAPB), found in Homo sapiens (Human).